A 159-amino-acid chain; its full sequence is 2-C-methyl-D-erythritol 2,4-cyclodiphosphate synthase (159 aa).

Positions 8 and 10 each coordinate a divalent metal cation. 4-CDP-2-C-methyl-D-erythritol 2-phosphate is bound by residues 8–10 (DVH) and 34–35 (HS). Position 42 (H42) interacts with a divalent metal cation. 4-CDP-2-C-methyl-D-erythritol 2-phosphate is bound by residues 56–58 (DIG), 61–65 (FPDTD), 100–106 (AQAPKML), 132–135 (TTTE), F139, and R142.

It belongs to the IspF family. As to quaternary structure, homotrimer. A divalent metal cation serves as cofactor.

The enzyme catalyses 4-CDP-2-C-methyl-D-erythritol 2-phosphate = 2-C-methyl-D-erythritol 2,4-cyclic diphosphate + CMP. It participates in isoprenoid biosynthesis; isopentenyl diphosphate biosynthesis via DXP pathway; isopentenyl diphosphate from 1-deoxy-D-xylulose 5-phosphate: step 4/6. Involved in the biosynthesis of isopentenyl diphosphate (IPP) and dimethylallyl diphosphate (DMAPP), two major building blocks of isoprenoid compounds. Catalyzes the conversion of 4-diphosphocytidyl-2-C-methyl-D-erythritol 2-phosphate (CDP-ME2P) to 2-C-methyl-D-erythritol 2,4-cyclodiphosphate (ME-CPP) with a corresponding release of cytidine 5-monophosphate (CMP). In Citrobacter koseri (strain ATCC BAA-895 / CDC 4225-83 / SGSC4696), this protein is 2-C-methyl-D-erythritol 2,4-cyclodiphosphate synthase.